Consider the following 100-residue polypeptide: Competence protein ComGE (100 aa).

Residues 15–35 (VILLEAVVALAIFASIATLLL) traverse the membrane as a helical segment.

The transformation pili are flexible filaments, consisting mainly of the major pilin ComGC and smaller amounts of the minor pilins, including at least ComGD, ComGF and ComGG, and perhaps ComGE. Interacts with ComGD. Interacts with ComGF. Interacts with ComGG.

Its subcellular location is the cell membrane. It localises to the cell surface. Functionally, required for formation of the type IV-like pilus (T4P) that plays a role in transformation. Transformation pili are dynamically extended and retracted, perhaps thereby promoting DNA uptake and transformation. Involved in transformation. Required for DNA binding. This chain is Competence protein ComGE, found in Streptococcus pneumoniae (strain ATCC BAA-255 / R6).